Consider the following 25-residue polypeptide: Caerin-1.18 (25 aa).

Position 25 is a leucine amide (L25).

In terms of tissue distribution, expressed by the skin dorsal glands.

The protein localises to the secreted. Its function is as follows. Shows significant activity against Gram-positive organisms, but is less effective against Gram-negative organisms. This is Caerin-1.18 from Ranoidea gracilenta (Dainty green tree frog).